We begin with the raw amino-acid sequence, 525 residues long: Peptide chain release factor 3 (525 aa).

The tr-type G domain maps to 11–279; sequence ERRRTFAIIS…AFVDMAPAPE (269 aa). Residues 20-27, 88-92, and 142-145 each bind GTP; these read SHPDAGKT, DTPGH, and NKLD.

It belongs to the TRAFAC class translation factor GTPase superfamily. Classic translation factor GTPase family. PrfC subfamily.

It is found in the cytoplasm. Its function is as follows. Increases the formation of ribosomal termination complexes and stimulates activities of RF-1 and RF-2. It binds guanine nucleotides and has strong preference for UGA stop codons. It may interact directly with the ribosome. The stimulation of RF-1 and RF-2 is significantly reduced by GTP and GDP, but not by GMP. The polypeptide is Peptide chain release factor 3 (Latilactobacillus sakei subsp. sakei (strain 23K) (Lactobacillus sakei subsp. sakei)).